A 72-amino-acid polypeptide reads, in one-letter code: Translation initiation factor IF-1 (72 aa).

The 72-residue stretch at 1–72 (MAKEEAIEIE…SKGRITYRYK (72 aa)) folds into the S1-like domain.

The protein belongs to the IF-1 family. Component of the 30S ribosomal translation pre-initiation complex which assembles on the 30S ribosome in the order IF-2 and IF-3, IF-1 and N-formylmethionyl-tRNA(fMet); mRNA recruitment can occur at any time during PIC assembly.

It localises to the cytoplasm. One of the essential components for the initiation of protein synthesis. Stabilizes the binding of IF-2 and IF-3 on the 30S subunit to which N-formylmethionyl-tRNA(fMet) subsequently binds. Helps modulate mRNA selection, yielding the 30S pre-initiation complex (PIC). Upon addition of the 50S ribosomal subunit IF-1, IF-2 and IF-3 are released leaving the mature 70S translation initiation complex. The polypeptide is Translation initiation factor IF-1 (Chlorobium luteolum (strain DSM 273 / BCRC 81028 / 2530) (Pelodictyon luteolum)).